Here is a 223-residue protein sequence, read N- to C-terminus: Charged multivesicular body protein 3 (223 aa).

Gly-2 carries the N-myristoyl glycine lipid modification. Positions 2-113 (GLFGKTQEKP…LQKSTEVMKA (112 aa)) are intramolecular interaction with C-terminus. The stretch at 22–54 (KIRKEMRVVDRQIRDIQREEEKVKRSVKDAAKK) forms a coiled coil. 2 important for autoinhibitory function regions span residues 59-64 (VCVVLA) and 168-169 (IL). The stretch at 149–223 (ESMDDQEEME…MQSRLATLRS (75 aa)) forms a coiled coil. An intramolecular interaction with N-terminus region spans residues 151-221 (MDDQEEMEEA…EAMQSRLATL (71 aa)). Residues 151–223 (MDDQEEMEEA…MQSRLATLRS (73 aa)) form an interaction with VPS4A region. Residue Lys-179 forms a Glycyl lysine isopeptide (Lys-Gly) (interchain with G-Cter in ubiquitin) linkage. A disordered region spans residues 180–223 (APSKVTDALPEPEPAGAMAASEGDEEDDEEDLEAMQSRLATLRS). Interaction with STAMBP stretches follow at residues 196-223 (AMAA…TLRS), 204-208 (EEDDE), and 222-223 (RS). Residue Ser-200 is modified to Phosphoserine. Positions 201–212 (EGDEEDDEEDLE) match the MIT-interacting motif motif. The segment covering 201 to 212 (EGDEEDDEEDLE) has biased composition (acidic residues).

This sequence belongs to the SNF7 family. In terms of assembly, probable core component of the endosomal sorting required for transport complex III (ESCRT-III). ESCRT-III components are thought to multimerize to form a flat lattice on the perimeter membrane of the endosome. Several assembly forms of ESCRT-III may exist that interact and act sequentially. Forms a metastable monomer in solution; its core structure (without part of the putative autoinhibitory C-terminal acidic region) oligomerizes into a flat lattice via two different dimerization interfaces. In vitro, heteromerizes with CHMP2A (but not CHMP4) to form helical tubular structures that expose membrane-interacting sites on the outside whereas VPS4B can associate on the inside of the tubule. May interact with IGFBP7; the relevance of such interaction however remains unclear. Interacts with CHMP2A. Interacts with CHMP4A; the interaction requires the release of CHMP4A autoinhibition. Interacts with VPS4A. Interacts with STAMBP; the interaction appears to relieve the autoinhibition of CHMP3. Interacts with VTA1.

Its subcellular location is the cytoplasm. It localises to the cytosol. The protein resides in the membrane. It is found in the endosome. The protein localises to the late endosome membrane. Probable core component of the endosomal sorting required for transport complex III (ESCRT-III) which is involved in multivesicular bodies (MVBs) formation and sorting of endosomal cargo proteins into MVBs. MVBs contain intraluminal vesicles (ILVs) that are generated by invagination and scission from the limiting membrane of the endosome and mostly are delivered to lysosomes enabling degradation of membrane proteins, such as stimulated growth factor receptors, lysosomal enzymes and lipids. The MVB pathway appears to require the sequential function of ESCRT-O, -I,-II and -III complexes. ESCRT-III proteins mostly dissociate from the invaginating membrane before the ILV is released. The ESCRT machinery also functions in topologically equivalent membrane fission events, such as the terminal stages of cytokinesis. ESCRT-III proteins are believed to mediate the necessary vesicle extrusion and/or membrane fission activities, possibly in conjunction with the AAA ATPase VPS4. Selectively binds to phosphatidylinositol 3,5-bisphosphate PtdIns(3,5)P2 and PtdIns(3,4)P2 in preference to other phosphoinositides tested. Involved in late stages of cytokinesis. Plays a role in endosomal sorting/trafficking of EGF receptor. This chain is Charged multivesicular body protein 3 (Chmp3), found in Rattus norvegicus (Rat).